The primary structure comprises 81 residues: Large ribosomal subunit protein bL27 (81 aa).

Over residues methionine 1 to lysine 11 the composition is skewed to polar residues. Positions methionine 1 to serine 26 are disordered.

Belongs to the bacterial ribosomal protein bL27 family.

This chain is Large ribosomal subunit protein bL27, found in Borrelia turicatae (strain 91E135).